A 144-amino-acid polypeptide reads, in one-letter code: Eukaryotic translation initiation factor 1A, X-chromosomal (144 aa).

The span at 1-15 (MPKNKGKGGKNRRRG) shows a compositional bias: basic residues. 2 disordered regions span residues 1–26 (MPKNKGKGGKNRRRGKNENESEKREL) and 114–144 (KINETDTFGPGDDDEIQFDDIGDDDEDIDDI). Residues 16–26 (KNENESEKREL) show a composition bias toward basic and acidic residues. An S1-like domain is found at 22–96 (EKRELVFKED…NKADVILKYN (75 aa)). Residues 124 to 144 (GDDDEIQFDDIGDDDEDIDDI) are compositionally biased toward acidic residues.

This sequence belongs to the eIF-1A family. As to quaternary structure, component of the 43S pre-initiation complex (43S PIC), which is composed of the 40S ribosomal subunit, EIF1, eIF1A (EIF1AX), eIF3 complex, EIF5 and eIF2-GTP-initiator tRNA complex (eIF2 ternary complex). Interacts with EIF5; this interaction contributes to the maintenance of EIF1 within the open 43S PIC. Interacts through its C-terminal domain (CTD) with the CTD of EIF5B; from the location of the start codon by the 43S complex until the formation of the 80S complex. In terms of assembly, (Microbial infection) Interacts with human respiratory syncytial virus (HRSV) nucleoprotein; this interaction recruits EIF1AX to the viral replication complex to facilitate viral genomic RNA synthesis and virus production.

Its subcellular location is the cytoplasm. Functionally, component of the 43S pre-initiation complex (43S PIC), which binds to the mRNA cap-proximal region, scans mRNA 5'-untranslated region, and locates the initiation codon. This protein enhances formation of the cap-proximal complex. Together with EIF1, facilitates scanning, start codon recognition, promotion of the assembly of 48S complex at the initiation codon (43S PIC becomes 48S PIC after the start codon is reached), and dissociation of aberrant complexes. After start codon location, together with EIF5B orients the initiator methionine-tRNA in a conformation that allows 60S ribosomal subunit joining to form the 80S initiation complex. Is released after 80S initiation complex formation, just after GTP hydrolysis by EIF5B, and before release of EIF5B. Its globular part is located in the A site of the 40S ribosomal subunit. Its interaction with EIF5 during scanning contribute to the maintenance of EIF1 within the open 43S PIC. In contrast to yeast orthologs, does not bind EIF1. This chain is Eukaryotic translation initiation factor 1A, X-chromosomal (EIF1AX), found in Homo sapiens (Human).